The following is a 131-amino-acid chain: Proline-rich protein 3 (131 aa).

Residues 1-77 form a disordered region; sequence LHRGPPGSRG…KEQRNPRRLK (77 aa). A compositionally biased stretch (pro residues) spans 12-25; sequence MIPPLLSLPPPPRG. Positions 28 to 44 are enriched in gly residues; the sequence is PLRGGLGPRSGPYGRGW. The C3H1-type zinc finger occupies 98 to 126; that stretch reads KSDRPVCRHFAKKGHCRYEDLCAFYHPGA.

The protein is Proline-rich protein 3 (PRR3) of Sus scrofa (Pig).